Here is a 325-residue protein sequence, read N- to C-terminus: Dimethylsulfide dehydrogenase subunit beta (325 aa).

4Fe-4S ferredoxin-type domains lie at 6–35 (ISMV…RNGR), 123–154 (SYYF…KRQE), and 156–185 (GIVL…FNEQ). [4Fe-4S] cluster is bound by residues C15, C18, C21, C25, C132, C135, and C140. Residues C144, C165, and C171 each coordinate [3Fe-4S] cluster. [4Fe-4S] cluster contacts are provided by C175, C192, C195, C207, and C211.

As to quaternary structure, heterotrimer of alpha, beta and gamma subunits. The cofactor is [3Fe-4S] cluster. [4Fe-4S] cluster serves as cofactor.

The protein resides in the periplasm. Functionally, electron transfer subunit of the dehydrogenase during anaerobic growth on dimethyl sulfide. The protein is Dimethylsulfide dehydrogenase subunit beta (ddhB) of Rhodovulum sulfidophilum (Rhodobacter sulfidophilus).